Consider the following 963-residue polypeptide: Ubiquitin carboxyl-terminal hydrolase 4 (963 aa).

A DUSP domain is found at 11–122 (PDAETQKSEL…GQQPIVRKVV (112 aa)). The interval 27-216 (TLQRGAQWYL…LYQGQVLVIE (190 aa)) is necessary for interaction with SART3. A Nuclear export signal motif is present at residues 133–141 (VEVYLLELK). The 85-residue stretch at 142–226 (LCENSDPTNV…PQNEDGTWPR (85 aa)) folds into the Ubiquitin-like 1 domain. Residues 219-277 (NEDGTWPRQTQQSKSSTAPSRNFTTSPKSSASPYSSVSASPIANGDSTNTSGMHSSGVS) are disordered. Polar residues predominate over residues 225–243 (PRQTQQSKSSTAPSRNFTT). The segment at 229–295 (QQSKSSTAPS…SYNCQESPLT (67 aa)) is required for USP4 activation by providing conformational flexibility between the DUSP and catalytic domains. The span at 244–261 (SPKSSASPYSSVSASPIA) shows a compositional bias: low complexity. Residues 302–923 (CGLGNLGNTC…AAYVLFYQRR (622 aa)) form the USP domain. Cysteine 311 (nucleophile) is an active-site residue. Residues 384–386 (PQF) are regulates ubiquitin dissociation. Residues 405-407 (LHE) form a necessary for interaction with RBL2 region. Serine 445 bears the Phosphoserine mark. Residues 459-463 (LVCPE) are necessary for interaction with RB1 and RBL2. 2 residues coordinate Zn(2+): cysteine 461 and cysteine 464. Positions 483–571 (LKKDRVMEIF…IFVYEVCSTS (89 aa)) constitute a Ubiquitin-like 2 domain. An interacts with DUSP and ubiquitin-like 1 domains and is required for USP4 activation region spans residues 485-775 (KDRVMEIFLV…LQPQKKKKTA (291 aa)). The disordered stretch occupies residues 634-701 (PLPDESGSSP…ATQKKNKGRP (68 aa)). 2 positions are modified to phosphoserine: serine 675 and serine 680. Positions 767–772 (QPQKKK) match the Nuclear localization signal motif. Zn(2+) is bound by residues cysteine 799 and cysteine 802. Histidine 881 (proton acceptor) is an active-site residue. The segment at 930–963 (TPSLSFPGSSDGGARPSSSQQGTGDDETYSMDTN) is disordered. A compositionally biased stretch (acidic residues) spans 953-963 (GDDETYSMDTN).

Belongs to the peptidase C19 family. USP4 subfamily. In terms of assembly, interacts with RB1 (both dephosphorylated and hypophosphorylated forms). Interacts with RBL1 and RBL2. Interacts with ADORA2A (via cytoplasmic C-terminus); the interaction is direct. Interacts with SART3; recruits USP4 to its substrate PRPF3. Phosphorylated at Ser-445 by PKB/AKT1 in response to EGF stimulus, promoting its ability deubiquitinate RHEB. In terms of processing, monoubiquitinated by TRIM21. Ubiquitination does not lead to its proteasomal degradation. Autodeubiquitinated.

It localises to the cytoplasm. Its subcellular location is the nucleus. The catalysed reaction is Thiol-dependent hydrolysis of ester, thioester, amide, peptide and isopeptide bonds formed by the C-terminal Gly of ubiquitin (a 76-residue protein attached to proteins as an intracellular targeting signal).. Its activity is regulated as follows. The completion of the deubiquitinase reaction is mediated by the DUSP and ubiquitin-like 1 domains which promotes the release of ubiquitin from the catalytic site enabling subsequent reactions to occur. Its function is as follows. Deubiquitinating enzyme that removes conjugated ubiquitin from target proteins. Deubiquitinates PDPK1. Deubiquitinates TRIM21. Deubiquitinates receptor ADORA2A which increases the amount of functional receptor at the cell surface. Deubiquitinates HAS2. Deubiquitinates RHEB in response to EGF signaling, promoting mTORC1 signaling. May regulate mRNA splicing through deubiquitination of the U4 spliceosomal protein PRPF3. This may prevent its recognition by the U5 component PRPF8 thereby destabilizing interactions within the U4/U6.U5 snRNP. May also play a role in the regulation of quality control in the ER. This chain is Ubiquitin carboxyl-terminal hydrolase 4 (USP4), found in Bos taurus (Bovine).